The sequence spans 338 residues: UDP-glucose 4-epimerase (338 aa).

NAD(+) is bound by residues 11–12, 31–36, 58–59, 80–84, Asn-99, Ser-124, Tyr-149, Lys-153, and Phe-178; these read YI, DNLCNS, DI, and FAGLK. Residues Ser-124 and Tyr-149 each coordinate substrate. Tyr-149 serves as the catalytic Proton acceptor. Substrate-binding positions include Asn-179, 199–200, 216–218, Arg-231, 292–295, and Tyr-299; these read NL, AIF, and REGD.

The protein belongs to the NAD(P)-dependent epimerase/dehydratase family. Homodimer. Requires NAD(+) as cofactor.

It catalyses the reaction UDP-alpha-D-glucose = UDP-alpha-D-galactose. It participates in carbohydrate metabolism; galactose metabolism. Involved in the metabolism of galactose. Catalyzes the conversion of UDP-galactose (UDP-Gal) to UDP-glucose (UDP-Glc) through a mechanism involving the transient reduction of NAD. This is UDP-glucose 4-epimerase (galE) from Yersinia pestis.